The primary structure comprises 106 residues: UPF0145 protein CPE0882 (106 aa).

Belongs to the UPF0145 family.

The polypeptide is UPF0145 protein CPE0882 (Clostridium perfringens (strain 13 / Type A)).